The sequence spans 129 residues: Small ribosomal subunit protein uS12 (129 aa).

D89 is subject to 3-methylthioaspartic acid. Residues 101 to 129 are disordered; the sequence is TLDTSGVSDRKQSRSKYGAKQPKAVAAKK.

It belongs to the universal ribosomal protein uS12 family. As to quaternary structure, part of the 30S ribosomal subunit. Contacts proteins S8 and S17. May interact with IF1 in the 30S initiation complex.

Its function is as follows. With S4 and S5 plays an important role in translational accuracy. Interacts with and stabilizes bases of the 16S rRNA that are involved in tRNA selection in the A site and with the mRNA backbone. Located at the interface of the 30S and 50S subunits, it traverses the body of the 30S subunit contacting proteins on the other side and probably holding the rRNA structure together. The combined cluster of proteins S8, S12 and S17 appears to hold together the shoulder and platform of the 30S subunit. This chain is Small ribosomal subunit protein uS12, found in Chlorobium luteolum (strain DSM 273 / BCRC 81028 / 2530) (Pelodictyon luteolum).